The chain runs to 62 residues: uncharacterized protein (62 aa).

A compositionally biased stretch (polar residues) spans 1-18; it reads MTTNRVDPLEQTSPNTPT. Positions 1-24 are disordered; that stretch reads MTTNRVDPLEQTSPNTPTSKREKA.

This is an uncharacterized protein from Rickettsia conorii (strain ATCC VR-613 / Malish 7).